Consider the following 428-residue polypeptide: MIFAQEKLVDQGQGKWTVTIDGEQWIEFLKKAKNRLKANLVVPGFRKGKAPESETAKYLTPIKLYNEAFKIVIKPAFDFALTQENRIQNDNSPTPVIVKVSEKEIVIDFVFDLVLEVKIGEYKNISTIKKSTVEVSQEDVDNVIDMYRSRFAMQKEKEVSDQIQKGDIVTFDFKGYVDDQAFEGGEAKDFVLEIGSNQFVPGFEDSMIGLKVGENQEINVKFPEEYIPSLAGKDAKFVLNIKNIKEKILPAKDDELVKDLNLPDITTYVQLEEKVKKDVLEQKTKNNKSEFVENIIDEIIKTSEFQIPKTIVERQLKDVKKEFEDQLTQQKITLEKYKEITKISQEEIDEELKNDAIHRIKSFLVVSEIKNKENIKASEEAINTKFEEFANLYGIEVEKIKSLIDNQAIKHQVESELLETFIFENNGN.

The PPIase FKBP-type domain occupies G166–P250.

Belongs to the FKBP-type PPIase family. Tig subfamily.

The protein resides in the cytoplasm. It catalyses the reaction [protein]-peptidylproline (omega=180) = [protein]-peptidylproline (omega=0). Functionally, involved in protein export. Acts as a chaperone by maintaining the newly synthesized protein in an open conformation. Functions as a peptidyl-prolyl cis-trans isomerase. The protein is Trigger factor of Mycoplasma capricolum subsp. capricolum (strain California kid / ATCC 27343 / NCTC 10154).